Reading from the N-terminus, the 119-residue chain is U-scoloptoxin(01)-Er1a (119 aa).

Positions 1-22 are cleaved as a signal peptide; that stretch reads MEIHSNIILLLLIALFAIFVKM. One can recognise a Chitin-binding type-2 domain in the interval 39 to 97; it reads NFACSGKKPGFYADEGFDCQVYHMCSPEGQLTTYLCGPGTIFNQKKLVCDLPTNYNCAD. A disulfide bond links Cys-74 and Cys-87.

It belongs to the scoloptoxin-01 family. Post-translationally, contains 3 disulfide bonds. As to expression, expressed by the venom gland.

Its subcellular location is the secreted. The chain is U-scoloptoxin(01)-Er1a from Ethmostigmus rubripes (Giant centipede).